Here is a 96-residue protein sequence, read N- to C-terminus: Co-chaperonin GroES (96 aa).

It belongs to the GroES chaperonin family. In terms of assembly, heptamer of 7 subunits arranged in a ring. Interacts with the chaperonin GroEL.

Its subcellular location is the cytoplasm. Together with the chaperonin GroEL, plays an essential role in assisting protein folding. The GroEL-GroES system forms a nano-cage that allows encapsulation of the non-native substrate proteins and provides a physical environment optimized to promote and accelerate protein folding. GroES binds to the apical surface of the GroEL ring, thereby capping the opening of the GroEL channel. The chain is Co-chaperonin GroES from Haemophilus influenzae (strain 86-028NP).